The primary structure comprises 429 residues: Glucose-6-phosphate isomerase (429 aa).

Glu282 (proton donor) is an active-site residue. Active-site residues include His303 and Lys418.

Belongs to the GPI family.

The protein resides in the cytoplasm. It carries out the reaction alpha-D-glucose 6-phosphate = beta-D-fructose 6-phosphate. It participates in carbohydrate biosynthesis; gluconeogenesis. It functions in the pathway carbohydrate degradation; glycolysis; D-glyceraldehyde 3-phosphate and glycerone phosphate from D-glucose: step 2/4. Catalyzes the reversible isomerization of glucose-6-phosphate to fructose-6-phosphate. The sequence is that of Glucose-6-phosphate isomerase from Mesomycoplasma hyopneumoniae (strain 7448) (Mycoplasma hyopneumoniae).